A 639-amino-acid polypeptide reads, in one-letter code: mRNA export factor (639 aa).

3 disordered regions span residues 1–45 (MQAE…SLES), 63–287 (LLGD…KWGA), and 322–355 (CTAR…SQPR). Residues 142 to 152 (PRRRTHARSRS) are compositionally biased toward basic residues. The segment covering 153–169 (PRAGSTSSQQPPSSSGG) has biased composition (low complexity). Positions 175 to 189 (VRREAGDRETSEKPA) are enriched in basic and acidic residues. Over residues 203–215 (HQCQSPPAQTASQ) the composition is skewed to polar residues. Composition is skewed to basic and acidic residues over residues 234 to 247 (RTPH…HEGA) and 326 to 348 (DPAR…ERRT). 4 residues coordinate Zn(2+): Cys525, His606, Cys610, and Cys615. The CHC2-type zinc finger occupies 525 to 615 (CHLAASKSPL…HANVCRKEEC (91 aa)).

This sequence belongs to the HHV-1 ICP27 protein family.

It is found in the host cytoplasm. It localises to the host nucleus. Multifunctional regulator of the expression of viral genes that mediates nuclear export of viral intronless mRNAs. This immediate early (EI) protein promotes the nuclear export of viral intronless mRNAs. This Amazona oratrix (yellow-headed parrot) protein is mRNA export factor.